The following is a 139-amino-acid chain: Actin-depolymerizing factor (139 aa).

The 135-residue stretch at 5–139 (SSGMAVDDEC…SMDIIKARAF (135 aa)) folds into the ADF-H domain.

The protein belongs to the actin-binding proteins ADF family. As to expression, preferentially in mature anther.

Its function is as follows. Actin-depolymerizing protein. Severs actin filaments (F-actin) and binds to actin monomers. In Lilium longiflorum (Trumpet lily), this protein is Actin-depolymerizing factor.